The following is a 193-amino-acid chain: Putative protein-glutamate methylesterase/protein-glutamine glutaminase (193 aa).

One can recognise a CheB-type methylesterase domain in the interval 1-179 (MNYEAIVIGV…DYVLSLEKIA (179 aa)). Catalysis depends on residues Ser11, His38, and Asp131.

This sequence belongs to the CheB family.

The protein localises to the cytoplasm. It catalyses the reaction [protein]-L-glutamate 5-O-methyl ester + H2O = L-glutamyl-[protein] + methanol + H(+). The enzyme catalyses L-glutaminyl-[protein] + H2O = L-glutamyl-[protein] + NH4(+). May be involved in chemotaxis. The chain is Putative protein-glutamate methylesterase/protein-glutamine glutaminase (cheB2) from Leptospira interrogans serogroup Icterohaemorrhagiae serovar copenhageni (strain Fiocruz L1-130).